Here is a 431-residue protein sequence, read N- to C-terminus: Glutamate-1-semialdehyde 2,1-aminomutase (431 aa).

N6-(pyridoxal phosphate)lysine is present on K265.

It belongs to the class-III pyridoxal-phosphate-dependent aminotransferase family. HemL subfamily. Homodimer. It depends on pyridoxal 5'-phosphate as a cofactor.

The protein localises to the cytoplasm. The catalysed reaction is (S)-4-amino-5-oxopentanoate = 5-aminolevulinate. The protein operates within porphyrin-containing compound metabolism; protoporphyrin-IX biosynthesis; 5-aminolevulinate from L-glutamyl-tRNA(Glu): step 2/2. The polypeptide is Glutamate-1-semialdehyde 2,1-aminomutase (Aliivibrio fischeri (strain MJ11) (Vibrio fischeri)).